A 305-amino-acid polypeptide reads, in one-letter code: MELTFLGTNAGVPSKDRNVTSMVLDLQNKQKSLWMFDCGEATQHQILHSHVKLSRINKIFITHLHGDHIFGLPGLLCSRSMGGTENPLTIYGPTGIKAFIETALTLSQSYLTYPLDIIEIEQDGFLFEEEGIRASCGALSHPVPCFGYRLEEDNKPGKLNADKLETENIPRGPWYKLLKQGKTVTLPDGRIIDGKDYLSTEIKGRCIVIFGDTQPTPNAVKLAENADVIVHEATFKHDMADKANSRGHSSTIQAAELAKKANAKRLIITHISSRYSPKETPELLAECHTIFDNTQIASDFETFKL.

Zn(2+)-binding residues include His-63, His-65, Asp-67, His-68, His-141, Asp-212, and His-270. The active-site Proton acceptor is the Asp-67.

Belongs to the RNase Z family. RNase BN subfamily. As to quaternary structure, homodimer. The cofactor is Zn(2+).

Its function is as follows. Zinc phosphodiesterase, which has both exoribonuclease and endoribonuclease activities. In Proteus mirabilis (strain HI4320), this protein is Ribonuclease BN.